Reading from the N-terminus, the 199-residue chain is Recombination protein RecR (199 aa).

The C4-type zinc finger occupies 57-72 (CEICGNLDTKSICHIC). The 96-residue stretch at 80 to 175 (STIAIVETVA…KISRLASGIP (96 aa)) folds into the Toprim domain.

Belongs to the RecR family.

May play a role in DNA repair. It seems to be involved in an RecBC-independent recombinational process of DNA repair. It may act with RecF and RecO. This is Recombination protein RecR from Rickettsia prowazekii (strain Madrid E).